Here is a 102-residue protein sequence, read N- to C-terminus: A-type ATP synthase subunit F (102 aa).

The protein belongs to the V-ATPase F subunit family. As to quaternary structure, has multiple subunits with at least A(3), B(3), C, D, E, F, H, I and proteolipid K(x).

Its subcellular location is the cell membrane. Functionally, component of the A-type ATP synthase that produces ATP from ADP in the presence of a proton gradient across the membrane. The polypeptide is A-type ATP synthase subunit F (Thermococcus gammatolerans (strain DSM 15229 / JCM 11827 / EJ3)).